The following is a 415-amino-acid chain: MQLTAVGLNHQTAPLSIREKLAFAAAALPEAVRNLARSNAATEAVILSTCNRTELYCVGDSEEIIRWLADYHSLPIEEIRPYLYTLDMQETVRHAFRVACGLDSMVLGEPQILGQIKDAVRAAQEQESMGAKLNALFQKTFSVAKEVRTDTAVGENSVSMASASVKLAEQIFPDIGDLNVLFIGAGEMIELVATYFAAKNPRLMTVANRTLARAQELCDKLGVNAEPCLLSDLPAILHDYDVVVSSTASQLPIVGKGMVERALKQRQSMPLFMLDLAVPRDIEAEVGDLNDAYLYTVDDMVNIVQSGKEARQKAAAAAETLVSEKVAEFVRQQQGRQSVPLIKALRDEGEKARKQVLENAMKQLAKGATAEEVLERLSVQLTNKLLHSPTQTLNKAGEEDKDLVHAVAQIYHLDK.

Substrate is bound by residues 49–52 (TCNR), Ser-104, 109–111 (EPQ), and Gln-115. The active-site Nucleophile is Cys-50. Residue 184 to 189 (GAGEMI) coordinates NADP(+).

The protein belongs to the glutamyl-tRNA reductase family. In terms of assembly, homodimer.

It catalyses the reaction (S)-4-amino-5-oxopentanoate + tRNA(Glu) + NADP(+) = L-glutamyl-tRNA(Glu) + NADPH + H(+). It participates in porphyrin-containing compound metabolism; protoporphyrin-IX biosynthesis; 5-aminolevulinate from L-glutamyl-tRNA(Glu): step 1/2. Functionally, catalyzes the NADPH-dependent reduction of glutamyl-tRNA(Glu) to glutamate 1-semialdehyde (GSA). This is Glutamyl-tRNA reductase from Neisseria gonorrhoeae (strain ATCC 700825 / FA 1090).